We begin with the raw amino-acid sequence, 368 residues long: tRNA-specific 2-thiouridylase MnmA (368 aa).

ATP is bound by residues 11 to 18 (GMSGGVDS) and M37. An interaction with target base in tRNA region spans residues 97-99 (NPD). C102 acts as the Nucleophile in catalysis. A disulfide bond links C102 and C199. G127 contacts ATP. The segment at 149 to 151 (KDQ) is interaction with tRNA. C199 (cysteine persulfide intermediate) is an active-site residue. The segment at 311 to 312 (RY) is interaction with tRNA.

The protein belongs to the MnmA/TRMU family. As to quaternary structure, interacts with TusE.

Its subcellular location is the cytoplasm. The enzyme catalyses S-sulfanyl-L-cysteinyl-[protein] + uridine(34) in tRNA + AH2 + ATP = 2-thiouridine(34) in tRNA + L-cysteinyl-[protein] + A + AMP + diphosphate + H(+). Functionally, catalyzes the 2-thiolation of uridine at the wobble position (U34) of tRNA(Lys), tRNA(Glu) and tRNA(Gln), leading to the formation of s(2)U34, the first step of tRNA-mnm(5)s(2)U34 synthesis. Sulfur is provided by IscS, via a sulfur-relay system. Binds ATP and its substrate tRNAs. The protein is tRNA-specific 2-thiouridylase MnmA of Escherichia coli (strain SMS-3-5 / SECEC).